The sequence spans 37 residues: MKVRPSVKKMCDKCKVVRRKGVVRIICENPKHKQRQG.

This sequence belongs to the bacterial ribosomal protein bL36 family.

This chain is Large ribosomal subunit protein bL36, found in Campylobacter jejuni subsp. jejuni serotype O:6 (strain 81116 / NCTC 11828).